Here is a 124-residue protein sequence, read N- to C-terminus: Histone H2B, embryonic (124 aa).

The interval 1–31 (MAPTAQVAKKGSKKAVKGTKTAXGGKKRNRK) is disordered. O-linked (GlcNAc) serine glycosylation occurs at S111. K119 participates in a covalent cross-link: Glycyl lysine isopeptide (Lys-Gly) (interchain with G-Cter in ubiquitin).

It belongs to the histone H2B family. As to quaternary structure, the nucleosome is a histone octamer containing two molecules each of H2A, H2B, H3 and H4 assembled in one H3-H4 heterotetramer and two H2A-H2B heterodimers. The octamer wraps approximately 147 bp of DNA. Monoubiquitination of Lys-119 gives a specific tag for epigenetic transcriptional activation and is also prerequisite for histone H3 'Lys-4' and 'Lys-79' methylation. In terms of processing, glcNAcylation at Ser-111 promotes monoubiquitination of Lys-119. It fluctuates in response to extracellular glucose, and associates with transcribed genes.

It is found in the nucleus. The protein resides in the chromosome. Its function is as follows. Core component of nucleosome. Nucleosomes wrap and compact DNA into chromatin, limiting DNA accessibility to the cellular machineries which require DNA as a template. Histones thereby play a central role in transcription regulation, DNA repair, DNA replication and chromosomal stability. DNA accessibility is regulated via a complex set of post-translational modifications of histones, also called histone code, and nucleosome remodeling. The sequence is that of Histone H2B, embryonic from Strongylocentrotus purpuratus (Purple sea urchin).